Reading from the N-terminus, the 106-residue chain is uncharacterized protein (106 aa).

Residues 38 to 106 (KGNKKSKAAT…STHLPYHGSY (69 aa)) form a disordered region. 2 stretches are compositionally biased toward basic and acidic residues: residues 57–71 (TRQE…HRPE) and 82–96 (WKKE…KETS).

It is found in the mitochondrion. This is an uncharacterized protein from Arabidopsis thaliana (Mouse-ear cress).